The chain runs to 204 residues: Protein-L-isoaspartate O-methyltransferase (204 aa).

It belongs to the methyltransferase superfamily. L-isoaspartyl/D-aspartyl protein methyltransferase family. In terms of assembly, monomer.

It localises to the cytoplasm. The enzyme catalyses [protein]-L-isoaspartate + S-adenosyl-L-methionine = [protein]-L-isoaspartate alpha-methyl ester + S-adenosyl-L-homocysteine. Catalyzes the methyl esterification of L-isoaspartyl residues in peptides and proteins that result from spontaneous decomposition of normal L-aspartyl and L-asparaginyl residues. It plays a role in the repair and/or degradation of damaged proteins. This Rhizobium meliloti (strain 1021) (Ensifer meliloti) protein is Protein-L-isoaspartate O-methyltransferase (pcm).